The primary structure comprises 309 residues: MPDLDSIVKDIAAEMRARPDRGAVASYIPELARVDAQGFGLVVIDGEGRVAAGGDADTPFSIQSISKVFTLTLALGMVGDRLWRRVGREPSGSPFNSIVQLEREHGIPRNPFINAGAIAVTDLILSGHQPREALGEILRFMQFVAQDDSITIDERVAASEKRTGFRNAALANYMRSFDVIENPVDYTLGVYFHHCAIAMTCRQLATAGLFLAYSGHHPLAGHSVISAERARRINAIMLTCGHYDGSGDFAYRVGLPGKSGVGGGILAVAPGKASICVWSPGLDAAGNSHLGRIALEMLVKRTGWSIFGV.

Substrate is bound by residues Ser64, Asn114, Glu160, Asn167, Tyr191, Tyr243, and Val261.

The protein belongs to the glutaminase family. As to quaternary structure, homotetramer.

It carries out the reaction L-glutamine + H2O = L-glutamate + NH4(+). The protein is Glutaminase of Methylorubrum extorquens (strain PA1) (Methylobacterium extorquens).